A 535-amino-acid chain; its full sequence is Phosphoenolpyruvate carboxykinase (ATP) (535 aa).

Substrate contacts are provided by Arg-59, Tyr-201, and Lys-207. Residues Lys-207, His-226, and 243 to 251 contribute to the ATP site; that span reads GLSGTGKTT. Positions 207 and 226 each coordinate Mn(2+). Asp-264 is a Mn(2+) binding site. Residues Glu-292, Arg-328, 444–445, and Thr-450 each bind ATP; that span reads RI. Arg-328 serves as a coordination point for substrate.

The protein belongs to the phosphoenolpyruvate carboxykinase (ATP) family. Requires Mn(2+) as cofactor.

The protein resides in the cytoplasm. It catalyses the reaction oxaloacetate + ATP = phosphoenolpyruvate + ADP + CO2. It participates in carbohydrate biosynthesis; gluconeogenesis. Involved in the gluconeogenesis. Catalyzes the conversion of oxaloacetate (OAA) to phosphoenolpyruvate (PEP) through direct phosphoryl transfer between the nucleoside triphosphate and OAA. This chain is Phosphoenolpyruvate carboxykinase (ATP), found in Porphyromonas gingivalis (strain ATCC BAA-308 / W83).